A 286-amino-acid chain; its full sequence is ATP synthase gamma chain (286 aa).

This sequence belongs to the ATPase gamma chain family. F-type ATPases have 2 components, CF(1) - the catalytic core - and CF(0) - the membrane proton channel. CF(1) has five subunits: alpha(3), beta(3), gamma(1), delta(1), epsilon(1). CF(0) has three main subunits: a, b and c.

The protein resides in the cell inner membrane. In terms of biological role, produces ATP from ADP in the presence of a proton gradient across the membrane. The gamma chain is believed to be important in regulating ATPase activity and the flow of protons through the CF(0) complex. The sequence is that of ATP synthase gamma chain from Shewanella denitrificans (strain OS217 / ATCC BAA-1090 / DSM 15013).